Reading from the N-terminus, the 109-residue chain is Urease subunit gamma (109 aa).

Belongs to the urease gamma subunit family. As to quaternary structure, heterotrimer of UreA (gamma), UreB (beta) and UreC (alpha) subunits. Three heterotrimers associate to form the active enzyme.

The protein resides in the cytoplasm. The enzyme catalyses urea + 2 H2O + H(+) = hydrogencarbonate + 2 NH4(+). Its pathway is nitrogen metabolism; urea degradation; CO(2) and NH(3) from urea (urease route): step 1/1. This Natronomonas pharaonis (strain ATCC 35678 / DSM 2160 / CIP 103997 / JCM 8858 / NBRC 14720 / NCIMB 2260 / Gabara) (Halobacterium pharaonis) protein is Urease subunit gamma.